The primary structure comprises 215 residues: GTP-binding nuclear protein Ran (215 aa).

The 165-residue stretch at 6 to 170 (DIPTFKLVLV…LWLARKLLGD (165 aa)) folds into the Small GTPase Ran-type domain. GTP contacts are provided by residues 17-24 (DGGTGKTT), 35-41 (EKKYVAT), G67, 121-124 (NKVD), and 149-151 (SAK). Residues 36–44 (KKYVATLGV) form a switch-I region. Residues 67–83 (GQEKFGGLRDGYYIQGQ) are switch-II.

Belongs to the small GTPase superfamily. Ran family. In terms of assembly, found in a nuclear export complex with RanGTP, exportin and pre-miRNA.

It is found in the nucleus. GTP-binding protein involved in nucleocytoplasmic transport. Required for the import of protein into the nucleus and also for RNA export. Involved in chromatin condensation and control of cell cycle. In Brugia malayi (Filarial nematode worm), this protein is GTP-binding nuclear protein Ran.